Here is an 89-residue protein sequence, read N- to C-terminus: Cell division topological specificity factor (89 aa).

It belongs to the MinE family.

Functionally, prevents the cell division inhibition by proteins MinC and MinD at internal division sites while permitting inhibition at polar sites. This ensures cell division at the proper site by restricting the formation of a division septum at the midpoint of the long axis of the cell. This is Cell division topological specificity factor from Laribacter hongkongensis (strain HLHK9).